The following is a 153-amino-acid chain: Protein Smg homolog (153 aa).

This sequence belongs to the Smg family.

This Neisseria meningitidis serogroup B (strain ATCC BAA-335 / MC58) protein is Protein Smg homolog.